Reading from the N-terminus, the 330-residue chain is Putative acetyltransferase ORF330 (330 aa).

A run of 10 helical transmembrane segments spans residues 29–49, 50–70, 90–110, 118–138, 163–183, 190–210, 225–245, 252–272, 273–293, and 297–317; these read GFAS…LPLS, IFRP…FLLL, IYPL…YYFH, LFLH…SYVF, FLLA…IVTL, LLYF…IAYI, ISFL…NEFL, VVVY…PPKV, LSKV…WHLL, and LLGV…EFPL.

The protein localises to the host membrane. This chain is Putative acetyltransferase ORF330, found in Acidianus convivator (ATV).